Consider the following 663-residue polypeptide: (R)-specific secondary-alkylsulfatase (663 aa).

A signal peptide spans 1–28; the sequence is MSRFIRASQRRTLLATLIAATLAQPLLA. Zn(2+) is bound by residues histidine 179, histidine 181, aspartate 183, and histidine 184. Glutamine 232 is a binding site for sulfate. The Zn(2+) site is built by glutamate 291 and aspartate 310. Residues 318 to 323 and arginine 328 each bind sulfate; that span reads NLLTPR. Histidine 355 contributes to the Zn(2+) binding site. Tyrosine 417 lines the sulfate pocket.

It belongs to the metallo-beta-lactamase superfamily. Type III sulfatase family. As to quaternary structure, homodimer.

It catalyses the reaction an (R)-secondary-alkyl sulfate + H2O = an (S)-secondary-alcohol + sulfate.. Alkylsulfatase that catalyzes the enantioselective hydrolysis of secondary-alkylsulfates with strict inversion of configuration, leading to the formation of homochiral (S)-configurated alcohols and nonreacted sulfate esters. The substrate spectrum includes a range of linear, branched or cyclic sec-alkylsulfates. Can use sec-alkylsulfate esters bearing aromatic, olefinic and acetylenic moieties. Acts by cleaving the C-O bond, resulting in inversion at the carbon. This is (R)-specific secondary-alkylsulfatase from Pseudomonas sp.